A 621-amino-acid polypeptide reads, in one-letter code: 1-deoxy-D-xylulose-5-phosphate synthase (621 aa).

Residues His80 and 121–123 (GHS) contribute to the thiamine diphosphate site. Asp152 serves as a coordination point for Mg(2+). Thiamine diphosphate contacts are provided by residues 153-154 (GA), Asn181, Tyr288, and Glu370. Residue Asn181 coordinates Mg(2+).

It belongs to the transketolase family. DXPS subfamily. As to quaternary structure, homodimer. Mg(2+) is required as a cofactor. Requires thiamine diphosphate as cofactor.

It catalyses the reaction D-glyceraldehyde 3-phosphate + pyruvate + H(+) = 1-deoxy-D-xylulose 5-phosphate + CO2. Its pathway is metabolic intermediate biosynthesis; 1-deoxy-D-xylulose 5-phosphate biosynthesis; 1-deoxy-D-xylulose 5-phosphate from D-glyceraldehyde 3-phosphate and pyruvate: step 1/1. Its function is as follows. Catalyzes the acyloin condensation reaction between C atoms 2 and 3 of pyruvate and glyceraldehyde 3-phosphate to yield 1-deoxy-D-xylulose-5-phosphate (DXP). The protein is 1-deoxy-D-xylulose-5-phosphate synthase of Shewanella frigidimarina (strain NCIMB 400).